A 436-amino-acid chain; its full sequence is Trigger factor (436 aa).

Disordered regions lie at residues 1–26 (MQVS…RVEN) and 81–100 (QESL…TGEG). The PPIase FKBP-type domain occupies 161–246 (EDRVVIDFHG…VKRVEEPQLP (86 aa)).

This sequence belongs to the FKBP-type PPIase family. Tig subfamily.

Its subcellular location is the cytoplasm. It catalyses the reaction [protein]-peptidylproline (omega=180) = [protein]-peptidylproline (omega=0). In terms of biological role, involved in protein export. Acts as a chaperone by maintaining the newly synthesized protein in an open conformation. Functions as a peptidyl-prolyl cis-trans isomerase. This chain is Trigger factor, found in Halorhodospira halophila (strain DSM 244 / SL1) (Ectothiorhodospira halophila (strain DSM 244 / SL1)).